The following is a 365-amino-acid chain: Putative clathrin assembly protein At4g40080 (365 aa).

Residues 29 to 167 enclose the ENTH domain; sequence NTKSKTLSFH…STSRIMGFFI (139 aa).

The protein resides in the membrane. It localises to the clathrin-coated pit. Its subcellular location is the golgi apparatus. It is found in the cytoplasmic vesicle. The protein localises to the clathrin-coated vesicle. The polypeptide is Putative clathrin assembly protein At4g40080 (Arabidopsis thaliana (Mouse-ear cress)).